The sequence spans 129 residues: KVYGRCELAAAMKRLGLDNYRGYSLGNWVCAAKFESNFNTHATNRNTDGSTDYGILQINSRWWCNDGRTPGSRNLCHISCSALLSSDITASVNCAKKIVSDRNGMNAWVAWRNRCKGTDVNAWIRGCRL.

Residues K1 to L129 enclose the C-type lysozyme domain. 4 disulfide bridges follow: C6–C127, C30–C115, C64–C80, and C76–C94. Catalysis depends on residues E35 and D52.

It belongs to the glycosyl hydrolase 22 family. As to quaternary structure, monomer.

It localises to the secreted. The enzyme catalyses Hydrolysis of (1-&gt;4)-beta-linkages between N-acetylmuramic acid and N-acetyl-D-glucosamine residues in a peptidoglycan and between N-acetyl-D-glucosamine residues in chitodextrins.. Its function is as follows. Lysozymes have primarily a bacteriolytic function; those in tissues and body fluids are associated with the monocyte-macrophage system and enhance the activity of immunoagents. This is Lysozyme C (LYZ) from Syrmaticus reevesii (Reeves's pheasant).